Consider the following 257-residue polypeptide: Imidazole glycerol phosphate synthase subunit HisF (257 aa).

Catalysis depends on residues D11 and D130.

The protein belongs to the HisA/HisF family. In terms of assembly, heterodimer of HisH and HisF.

Its subcellular location is the cytoplasm. It catalyses the reaction 5-[(5-phospho-1-deoxy-D-ribulos-1-ylimino)methylamino]-1-(5-phospho-beta-D-ribosyl)imidazole-4-carboxamide + L-glutamine = D-erythro-1-(imidazol-4-yl)glycerol 3-phosphate + 5-amino-1-(5-phospho-beta-D-ribosyl)imidazole-4-carboxamide + L-glutamate + H(+). It functions in the pathway amino-acid biosynthesis; L-histidine biosynthesis; L-histidine from 5-phospho-alpha-D-ribose 1-diphosphate: step 5/9. In terms of biological role, IGPS catalyzes the conversion of PRFAR and glutamine to IGP, AICAR and glutamate. The HisF subunit catalyzes the cyclization activity that produces IGP and AICAR from PRFAR using the ammonia provided by the HisH subunit. In Trichormus variabilis (strain ATCC 29413 / PCC 7937) (Anabaena variabilis), this protein is Imidazole glycerol phosphate synthase subunit HisF.